A 1345-amino-acid polypeptide reads, in one-letter code: DNA-directed RNA polymerase subunit beta (1345 aa).

Belongs to the RNA polymerase beta chain family. The RNAP catalytic core consists of 2 alpha, 1 beta, 1 beta' and 1 omega subunit. When a sigma factor is associated with the core the holoenzyme is formed, which can initiate transcription.

The enzyme catalyses RNA(n) + a ribonucleoside 5'-triphosphate = RNA(n+1) + diphosphate. Its function is as follows. DNA-dependent RNA polymerase catalyzes the transcription of DNA into RNA using the four ribonucleoside triphosphates as substrates. This Shewanella sp. (strain ANA-3) protein is DNA-directed RNA polymerase subunit beta.